Here is a 330-residue protein sequence, read N- to C-terminus: uncharacterized protein (330 aa).

The helical transmembrane segment at Ile-2 to Phe-22 threads the bilayer. Asn-72, Asn-94, Asn-234, and Asn-315 each carry an N-linked (GlcNAc...) asparagine; by host glycan.

The protein resides in the membrane. This is an uncharacterized protein from Acanthamoeba polyphaga mimivirus (APMV).